Consider the following 235-residue polypeptide: Probable carboxylesterase Os04g0669600 (235 aa).

Residues S113, D167, and H199 each act as charge relay system in the active site.

This sequence belongs to the AB hydrolase superfamily. AB hydrolase 2 family.

Its function is as follows. Possesses carboxylesterase activity in vitro. The polypeptide is Probable carboxylesterase Os04g0669600 (Oryza sativa subsp. japonica (Rice)).